Reading from the N-terminus, the 453-residue chain is Exopolyphosphatase PRUNE1 (453 aa).

Residue Met-1 is modified to N-acetylmethionine. 4 residues coordinate Mn(2+): Asp-28, Asp-30, Asp-106, and Asp-179. The short motif at Asp-106 to His-108 is the DHH motif element. Residues Ser-393–Pro-420 form an essential for homodimerization region. The disordered stretch occupies residues Ile-395–Leu-421. Ser-399 is subject to Phosphoserine. Position 410 is a phosphothreonine (Thr-410). A Phosphoserine modification is found at Ser-414.

It belongs to the PPase class C family. Prune subfamily. As to quaternary structure, homooligomer. Able to homodimerize via its C-terminal domain. Interacts with NME1. Interacts with GSK3; at focal adhesion complexes where paxillin and vinculin are colocalized. Interacts with alpha and beta tubulin. The cofactor is Mn(2+). Ubiquitously expressed. Seems to be overexpressed in aggressive sarcoma subtypes, such as leiomyosarcomas and malignant fibrous histiocytomas (MFH) as well as in the less malignant liposarcomas.

It is found in the cytoplasm. The protein localises to the nucleus. It localises to the cell junction. The protein resides in the focal adhesion. It catalyses the reaction diphosphate + H2O = 2 phosphate + H(+). Activated by magnesium ions and inhibited by manganese ions. Inhibited by dipyridamole, moderately sensitive to IBMX and inhibited by vinpocetine. Phosphodiesterase (PDE) that has higher activity toward cAMP than cGMP, as substrate. Plays a role in cell proliferation, migration and differentiation, and acts as a negative regulator of NME1. Plays a role in the regulation of neurogenesis. Involved in the regulation of microtubule polymerization. The chain is Exopolyphosphatase PRUNE1 from Homo sapiens (Human).